The chain runs to 94 residues: Small ubiquitin-related modifier 3 (94 aa).

Lys11 participates in a covalent cross-link: Glycyl lysine isopeptide (Lys-Gly) (interchain with G-Cter in SUMO). The region spanning 15–92 (DHINLKVAGQ…IDVFQQQTGG (78 aa)) is the Ubiquitin-like domain. A Glycyl lysine isopeptide (Gly-Lys) (interchain with K-? in acceptor proteins) cross-link involves residue Gly92. A propeptide spanning residues 93 to 94 (VC) is cleaved from the precursor.

Belongs to the ubiquitin family. SUMO subfamily. Interacts with sae2 and ube2i. Covalently attached to a number of proteins. Polymeric chains can be formed through Lys-11 cross-linking. In terms of processing, cleavage of precursor form by a sentrin-specific protease is necessary for function.

The protein localises to the cytoplasm. It localises to the nucleus. It is found in the PML body. Ubiquitin-like protein which can be covalently attached to target lysines either as a monomer or as a lysine-linked polymer. Does not seem to be involved in protein degradation and may function as an antagonist of ubiquitin in the degradation process. Plays a role in a number of cellular processes such as nuclear transport, DNA replication and repair, mitosis and signal transduction. Covalent attachment to its substrates requires prior activation by the E1 complex sae1-sae2 and linkage to the E2 enzyme ube2i. This is Small ubiquitin-related modifier 3 (sumo3) from Xenopus laevis (African clawed frog).